A 375-amino-acid polypeptide reads, in one-letter code: MDDVIKKGLSIVSELRDHGFEAYIVGGAVRDYHIGRKPKDVDVVTSASPEEIRTLYPHAFQINRQFQTLTVHLQKVAIEVSTLRGGSIEDDLCSRDFTINAMALAMNGDIIDPTGGKTDLENGVIRSFHPEARFKEDPLRMLRAPRFASELGFTVAKGTAEAIKGSCSLLADVAVERVEKELTQLMIGTHRSSGWCLLHETGLYPFIPGVSLSKETVLRMKEISRSPGLLPADGFWAILYLLENCSMKLPLAKEKKKRIRTIVHYVGERQNHSWNETMLYQASLSVATVVEQIRALFGQASVHEEELRQLWSSLPIQTRTELAVTGRDVMAHFQKKGGPWLADTLADIEEAVLLKHIENEKKSIIQWLEERRVES.

27–30 (GAVR) is a CTP binding site. Residues Asp40 and Asp42 each contribute to the Mg(2+) site. CTP is bound by residues 95 to 96 (RD), Asn100, 137 to 146 (DPLRMLRAPR), and Arg177.

Belongs to the tRNA nucleotidyltransferase/poly(A) polymerase family. Mg(2+) serves as cofactor.

The catalysed reaction is a tRNA precursor + 2 CTP = a tRNA with a 3' CC end + 2 diphosphate. Its function is as follows. tRNA nucleotidyltransferase involved in the synthesis of the tRNA CCA terminus. Adds the two cytidine residues to tRNA. The sequence is that of CC-adding tRNA nucleotidyltransferase from Halalkalibacterium halodurans (strain ATCC BAA-125 / DSM 18197 / FERM 7344 / JCM 9153 / C-125) (Bacillus halodurans).